A 530-amino-acid chain; its full sequence is uncharacterized protein (530 aa).

Basic and acidic residues-rich tracts occupy residues methionine 1–valine 11 and proline 28–proline 38. The interval methionine 1–proline 38 is disordered. The Cytoplasmic segment spans residues methionine 1 to serine 50. The chain crosses the membrane as a helical span at residues phenylalanine 51–valine 71. Residues alanine 72–serine 91 are Extracellular-facing. The chain crosses the membrane as a helical span at residues tryptophan 92 to glycine 112. Topologically, residues aspartate 113–arginine 119 are cytoplasmic. A helical transmembrane segment spans residues threonine 120–aspartate 140. Topologically, residues glutamate 141–serine 150 are extracellular. Residues glutamine 151–proline 171 traverse the membrane as a helical segment. The Cytoplasmic portion of the chain corresponds to lysine 172 to threonine 180. Residues alanine 181 to leucine 201 traverse the membrane as a helical segment. At threonine 202–glutamate 203 the chain is on the extracellular side. The chain crosses the membrane as a helical span at residues valine 204 to alanine 224. Residues arginine 225–aspartate 239 are Cytoplasmic-facing. The helical transmembrane segment at alanine 240 to glycine 260 threads the bilayer. Over proline 261–methionine 266 the chain is Extracellular. A helical transmembrane segment spans residues serine 267 to valine 287. Topologically, residues glutamate 288 to arginine 306 are cytoplasmic. Residues leucine 307–isoleucine 327 form a helical membrane-spanning segment. At glycine 328–glycine 343 the chain is on the extracellular side. A helical membrane pass occupies residues valine 344–valine 364. Topologically, residues serine 365–arginine 370 are cytoplasmic. Residues valine 371 to methionine 391 form a helical membrane-spanning segment. The Extracellular segment spans residues histidine 392–asparagine 400. The chain crosses the membrane as a helical span at residues leucine 401–leucine 421. Over serine 422–alanine 437 the chain is Cytoplasmic. Residues isoleucine 438–isoleucine 458 form a helical membrane-spanning segment. The Extracellular segment spans residues threonine 459 to threonine 488. A helical transmembrane segment spans residues tyrosine 489–glycine 509. Residues tyrosine 510–leucine 530 are Cytoplasmic-facing.

Belongs to the major facilitator superfamily.

It localises to the cell membrane. This is an uncharacterized protein from Mycobacterium tuberculosis (strain CDC 1551 / Oshkosh).